Consider the following 133-residue polypeptide: Mediator of RNA polymerase II transcription subunit 10 (133 aa).

Belongs to the Mediator complex subunit 10 family. In terms of assembly, component of the Mediator complex. Interacts with MED4 and MED21.

Its subcellular location is the nucleus. Component of the Mediator complex, a coactivator involved in the regulated transcription of nearly all RNA polymerase II-dependent genes. Mediator functions as a bridge to convey information from gene-specific regulatory proteins to the basal RNA polymerase II transcription machinery. Mediator is recruited to promoters by direct interactions with regulatory proteins and serves as a scaffold for the assembly of a functional preinitiation complex with RNA polymerase II and the general transcription factors. Required for activated transcription of the MtnA, MtnB and MtnD genes. In Drosophila melanogaster (Fruit fly), this protein is Mediator of RNA polymerase II transcription subunit 10 (MED10).